We begin with the raw amino-acid sequence, 333 residues long: Polygalacturonase inhibitor (333 aa).

An N-terminal signal peptide occupies residues Met1 to Ser27. Cystine bridges form between Cys30–Cys60 and Cys61–Cys68. LRR repeat units lie at residues Thr72–Leu96, Pro97–Lys120, Leu121–Glu144, Leu145–Leu169, Pro170–Lys192, Ala194–Pro220, Asn221–Ala240, Asn241–Phe263, Pro264–Leu288, and Leu290–Ser312. 4 N-linked (GlcNAc...) asparagine glycosylation sites follow: Asn109, Asn133, Asn147, and Asn157. Residue Asn241 is glycosylated (N-linked (GlcNAc...) asparagine). Asn294 carries an N-linked (GlcNAc...) asparagine glycan. 2 disulfide bridges follow: Cys301/Cys323 and Cys325/Cys332.

The protein belongs to the polygalacturonase-inhibiting protein family.

The protein localises to the secreted. Its subcellular location is the cell wall. It localises to the membrane. In terms of biological role, inhibitor of fungal polygalacturonase. It is an important factor for plant resistance to phytopathogenic fungi. This Vitis vinifera (Grape) protein is Polygalacturonase inhibitor (pgip).